The chain runs to 168 residues: NADH-quinone oxidoreductase subunit I (168 aa).

4Fe-4S ferredoxin-type domains lie at 58–88 and 99–128; these read LRRY…IEAG and VRYD…EGPN. The [4Fe-4S] cluster site is built by cysteine 68, cysteine 71, cysteine 74, cysteine 78, cysteine 108, cysteine 111, cysteine 114, and cysteine 118.

The protein belongs to the complex I 23 kDa subunit family. In terms of assembly, NDH-1 is composed of 14 different subunits. Subunits NuoA, H, J, K, L, M, N constitute the membrane sector of the complex. [4Fe-4S] cluster is required as a cofactor.

It localises to the cell inner membrane. The catalysed reaction is a quinone + NADH + 5 H(+)(in) = a quinol + NAD(+) + 4 H(+)(out). Its function is as follows. NDH-1 shuttles electrons from NADH, via FMN and iron-sulfur (Fe-S) centers, to quinones in the respiratory chain. The immediate electron acceptor for the enzyme in this species is believed to be ubiquinone. Couples the redox reaction to proton translocation (for every two electrons transferred, four hydrogen ions are translocated across the cytoplasmic membrane), and thus conserves the redox energy in a proton gradient. The chain is NADH-quinone oxidoreductase subunit I from Bradyrhizobium diazoefficiens (strain JCM 10833 / BCRC 13528 / IAM 13628 / NBRC 14792 / USDA 110).